Consider the following 423-residue polypeptide: UPF0229 protein PSEEN0423 (423 aa).

The tract at residues 85 to 107 (GEHIARPQGGGGGGGRGKAGNSG) is disordered. Residues 92–107 (QGGGGGGGRGKAGNSG) show a composition bias toward gly residues.

This sequence belongs to the UPF0229 family.

This Pseudomonas entomophila (strain L48) protein is UPF0229 protein PSEEN0423.